Consider the following 301-residue polypeptide: tRNA pseudouridine synthase B (301 aa).

Asp-45 (nucleophile) is an active-site residue.

It belongs to the pseudouridine synthase TruB family. Type 1 subfamily.

It catalyses the reaction uridine(55) in tRNA = pseudouridine(55) in tRNA. Its function is as follows. Responsible for synthesis of pseudouridine from uracil-55 in the psi GC loop of transfer RNAs. The sequence is that of tRNA pseudouridine synthase B from Streptomyces coelicolor (strain ATCC BAA-471 / A3(2) / M145).